An 859-amino-acid polypeptide reads, in one-letter code: Magnesium transporter ALR1 (859 aa).

Low complexity predominate over residues 1–20 (MSSSSSSSESSPNLSRSNSL). Disordered regions lie at residues 1-281 (MSSS…MPPQ) and 330-399 (TSST…NIPS). An N-acetylserine modification is found at S2. 2 stretches are compositionally biased toward basic and acidic residues: residues 28–42 (KTEDHTGLYDHRQHP) and 55–73 (KNKEIAKSTKPSIPKEQKS). Phosphotyrosine is present on Y77. Residue S85 is modified to Phosphoserine. Residues 144 to 154 (PPKDVGVKRDY) are compositionally biased toward basic and acidic residues. Over residues 157-176 (SSSTASSGNKSKLSASSSAS) the composition is skewed to low complexity. Residues S185 and S188 each carry the phosphoserine modification. Positions 193–203 (IPHESKSDTHS) are enriched in basic and acidic residues. Residues 213–235 (YSTTSAHSSINPAVLLTKSTSQK) show a composition bias toward polar residues. Phosphoserine is present on residues S220, S221, and S236. T242 is modified (phosphothreonine). Positions 252–265 (TRASFDSDVSQASR) are enriched in polar residues. Low complexity predominate over residues 330–339 (TSSTSTSGSS). Residues 353–375 (EKSESTNETEIHEKKEDEHEKIK) are compositionally biased toward basic and acidic residues. 2 helical membrane passes run 744-764 (TMIGTMLVPLNVITGLFGMNV) and 773-793 (IAWWFGILGVLLLLAVLGWFL). A disordered region spans residues 830 to 859 (FNDRSKNINVRAGPSNKSVASLPSRYSRYD). S850 is modified (phosphoserine).

It belongs to the CorA metal ion transporter (MIT) (TC 1.A.35) family.

It is found in the cell membrane. Its function is as follows. Plasma membrane magnesium transporter. This is Magnesium transporter ALR1 (ALR1) from Saccharomyces cerevisiae (strain ATCC 204508 / S288c) (Baker's yeast).